The following is a 378-amino-acid chain: Dual-specificity RNA methyltransferase RlmN (378 aa).

Glu-96 serves as the catalytic Proton acceptor. The region spanning 102–342 (QGGRGTLCVS…VRTTRGDDID (241 aa)) is the Radical SAM core domain. A disulfide bond links Cys-109 and Cys-345. The [4Fe-4S] cluster site is built by Cys-116, Cys-120, and Cys-123. Residues 170–171 (GE), Ser-202, 224–226 (SLH), and Asn-302 each bind S-adenosyl-L-methionine. Catalysis depends on Cys-345, which acts as the S-methylcysteine intermediate.

This sequence belongs to the radical SAM superfamily. RlmN family. It depends on [4Fe-4S] cluster as a cofactor.

Its subcellular location is the cytoplasm. The catalysed reaction is adenosine(2503) in 23S rRNA + 2 reduced [2Fe-2S]-[ferredoxin] + 2 S-adenosyl-L-methionine = 2-methyladenosine(2503) in 23S rRNA + 5'-deoxyadenosine + L-methionine + 2 oxidized [2Fe-2S]-[ferredoxin] + S-adenosyl-L-homocysteine. It catalyses the reaction adenosine(37) in tRNA + 2 reduced [2Fe-2S]-[ferredoxin] + 2 S-adenosyl-L-methionine = 2-methyladenosine(37) in tRNA + 5'-deoxyadenosine + L-methionine + 2 oxidized [2Fe-2S]-[ferredoxin] + S-adenosyl-L-homocysteine. In terms of biological role, specifically methylates position 2 of adenine 2503 in 23S rRNA and position 2 of adenine 37 in tRNAs. m2A2503 modification seems to play a crucial role in the proofreading step occurring at the peptidyl transferase center and thus would serve to optimize ribosomal fidelity. The protein is Dual-specificity RNA methyltransferase RlmN of Pseudomonas paraeruginosa (strain DSM 24068 / PA7) (Pseudomonas aeruginosa (strain PA7)).